Reading from the N-terminus, the 555-residue chain is NAD-dependent protein deacetylase sirtuin-1 (555 aa).

The Nuclear localization signal signature appears at 39-46 (PPKRKKRK). In terms of domain architecture, Deacetylase sirtuin-type spans 44 to 304 (KRKDINTIED…NELCHRLGGE (261 aa)). K46 bears the N6-acetyllysine mark. Residues 64–67 (IIVL) form a required for interaction with the sumoylated form of CCAR2 region. Residues 69–88 (GAGVSVSCGIPDFRSRDGIY) and 153–156 (QNID) each bind NAD(+). H171 serves as the catalytic Proton acceptor. Zn(2+)-binding residues include C179 and C182. K185 is modified (N6-acetyllysine). Positions 203 and 206 each coordinate Zn(2+). Residues C203 and C206 each carry the S-nitrosocysteine modification. N6-acetyllysine is present on K238. A Nuclear export signal motif is present at residues 241–247 (VDLLIVI). NAD(+) contacts are provided by residues 248-250 (GSS), 273-275 (NRE), and C290. Position 321 is an N6-acetyllysine (K321). Positions 335-354 (LPPTPLHISEDSSSPERTVP) are disordered. T338 carries the phosphothreonine modification. S343 carries the phosphoserine modification. Over residues 345–354 (DSSSPERTVP) the composition is skewed to polar residues. T352 carries the post-translational modification Phosphothreonine. K417 is modified (N6-acetyllysine). S466 and S468 each carry phosphoserine. Residues 469-529 (EDDALSSSSC…GGSGADGGDQ (61 aa)) form a disordered region. Low complexity predominate over residues 473–493 (LSSSSCGSNSDSGTCQSPSLE). Residues 494-514 (EPLEDESEIEEFYNGLEDDAD) show a composition bias toward acidic residues. S552 bears the Phosphoserine mark.

This sequence belongs to the sirtuin family. Class I subfamily. Interacts with XBP1 isoform 2. Found in a complex with PCAF and MYOD1. Interacts with FOXO1; the interaction deacetylates FOXO1, resulting in its nuclear retention and promotion of its transcriptional activity Component of the eNoSC complex, composed of SIRT1, SUV39H1 and RRP8. Interacts with HES1, HEY2 and PML. Interacts with RPS19BP1/AROS. Interacts with CCAR2 (via N-terminus); the interaction disrupts the interaction between SIRT1 and p53/TP53. Interacts with SETD7; the interaction induces the dissociation of SIRT1 from p53/TP53 and increases p53/TP53 activity. Interacts with MYCN, NR1I2, CREBZF, TSC2, TLE1, FOS, JUN, NR0B2, PPARG, NCOR, IRS1, IRS2 and NMNAT1. Interacts with HNF1A; the interaction occurs under nutrient restriction. Interacts with SUZ12; the interaction mediates the association with the PRC4 histone methylation complex which is specific as an association with PCR2 and PCR3 complex variants is not found. Interacts with HIV-1 tat. Interacts with BCL6; leads to a epigenetic repression of specific target genes. Interacts with CLOCK, BMAL1 and PER2. Interacts with PPARA; the interaction seems to be modulated by NAD(+) levels. Interacts with NR1H3 and this interaction is inhibited in the presence of CCAR2. Interacts with CHEK2. Interacts with p53/TP53. Exhibits a preferential interaction with sumoylated CCAR2 over its unmodified form. Interacts with PACS2. Interacts with SIRT7. Interacts with PUS7. Interacts with TULP3. Interacts with MORN3; the interaction enhances the ubiquitination of p53/TP53. Zn(2+) serves as cofactor. Methylated on multiple lysine residues; methylation is enhanced after DNA damage and is dispensable for deacetylase activity toward p53/TP53. In terms of processing, phosphorylated. Phosphorylated by STK4/MST1, resulting in inhibition of SIRT1-mediated p53/TP53 deacetylation. Phosphorylation by MAPK8/JNK1 at Thr-338 leads to increased nuclear localization and enzymatic activity. Phosphorylation at Thr-338 by DYRK1A and DYRK3 activates deacetylase activity and promotes cell survival. Phosphorylated by CaMK2, leading to increased p53/TP53 and NF-kappa-B p65/RELA deacetylation activity. Post-translationally, S-nitrosylated by GAPDH, leading to inhibit the NAD-dependent protein deacetylase activity. Acetylated at various Lys residues. Deacetylated via an autocatalytic mechanism. Autodeacetylation at Lys-46 promotes its protein deacetylase activity. In terms of processing, ubiquitinated; leading to degradation. Deubiquitinated by USP22; leading to stabilization.

The protein localises to the nucleus. The protein resides in the PML body. It is found in the cytoplasm. The catalysed reaction is N(6)-acetyl-L-lysyl-[protein] + NAD(+) + H2O = 2''-O-acetyl-ADP-D-ribose + nicotinamide + L-lysyl-[protein]. It carries out the reaction N(6)-propanoyl-L-lysyl-[protein] + NAD(+) + H2O = 3''-O-propanoyl-ADP-D-ribose + nicotinamide + L-lysyl-[protein]. The enzyme catalyses N(6)-(2E)-butenoyl-L-lysyl-[protein] + NAD(+) + H2O = 2''-O-(2E)-but-2-enoyl-ADP-D-ribose + nicotinamide + L-lysyl-[protein]. With respect to regulation, inhibited by nicotinamide. Activated by resveratrol (3,5,4'-trihydroxy-trans-stilbene), butein (3,4,2',4'-tetrahydroxychalcone), piceatannol (3,5,3',4'-tetrahydroxy-trans-stilbene), Isoliquiritigenin (4,2',4'-trihydroxychalcone), fisetin (3,7,3',4'-tetrahydroxyflavone) and quercetin (3,5,7,3',4'-pentahydroxyflavone). MAPK8/JNK1 and RPS19BP1/AROS act as positive regulators of deacetylation activity. Negatively regulated by CCAR2. In terms of biological role, NAD-dependent protein deacetylase that links transcriptional regulation directly to intracellular energetics and participates in the coordination of several separated cellular functions such as cell cycle, response to DNA damage, metabolism, apoptosis and autophagy. Can modulate chromatin function through deacetylation of histones and can promote alterations in the methylation of histones and DNA, leading to transcriptional repression. Deacetylates a broad range of transcription factors and coregulators, thereby regulating target gene expression positively and negatively. Serves as a sensor of the cytosolic ratio of NAD(+)/NADH which is altered by glucose deprivation and metabolic changes associated with caloric restriction. Is essential in skeletal muscle cell differentiation and in response to low nutrients mediates the inhibitory effect on skeletal myoblast differentiation which also involves 5'-AMP-activated protein kinase (AMPK) and nicotinamide phosphoribosyltransferase (NAMPT). Component of the eNoSC (energy-dependent nucleolar silencing) complex, a complex that mediates silencing of rDNA in response to intracellular energy status and acts by recruiting histone-modifying enzymes. The eNoSC complex is able to sense the energy status of cell: upon glucose starvation, elevation of NAD(+)/NADP(+) ratio activates SIRT1, leading to histone H3 deacetylation followed by dimethylation of H3 at 'Lys-9' (H3K9me2) by SUV39H1 and the formation of silent chromatin in the rDNA locus. Deacetylates 'Lys-266' of SUV39H1, leading to its activation. Inhibits skeletal muscle differentiation by deacetylating PCAF and MYOD1. Deacetylates H2A and 'Lys-26' of H1-4. Deacetylates 'Lys-16' of histone H4 (in vitro). Involved in NR0B2/SHP corepression function through chromatin remodeling: Recruited to LRH1 target gene promoters by NR0B2/SHP thereby stimulating histone H3 and H4 deacetylation leading to transcriptional repression. Proposed to contribute to genomic integrity via positive regulation of telomere length; however, reports on localization to pericentromeric heterochromatin are conflicting. Proposed to play a role in constitutive heterochromatin (CH) formation and/or maintenance through regulation of the available pool of nuclear SUV39H1. Upon oxidative/metabolic stress decreases SUV39H1 degradation by inhibiting SUV39H1 polyubiquitination by MDM2. This increase in SUV39H1 levels enhances SUV39H1 turnover in CH, which in turn seems to accelerate renewal of the heterochromatin which correlates with greater genomic integrity during stress response. Deacetylates 'Lys-382' of p53/TP53 and impairs its ability to induce transcription-dependent proapoptotic program and modulate cell senescence. Deacetylates TAF1B and thereby represses rDNA transcription by the RNA polymerase I. Deacetylates MYC, promotes the association of MYC with MAX and decreases MYC stability leading to compromised transformational capability. Deacetylates FOXO3 in response to oxidative stress thereby increasing its ability to induce cell cycle arrest and resistance to oxidative stress but inhibiting FOXO3-mediated induction of apoptosis transcriptional activity; also leading to FOXO3 ubiquitination and protesomal degradation. Appears to have a similar effect on MLLT7/FOXO4 in regulation of transcriptional activity and apoptosis. Deacetylates DNMT1; thereby impairs DNMT1 methyltransferase-independent transcription repressor activity, modulates DNMT1 cell cycle regulatory function and DNMT1-mediated gene silencing. Deacetylates RELA/NF-kappa-B p65 thereby inhibiting its transactivating potential and augments apoptosis in response to TNF-alpha. Deacetylates HIF1A, KAT5/TIP60, RB1 and HIC1. Deacetylates FOXO1 resulting in its nuclear retention and enhancement of its transcriptional activity leading to increased gluconeogenesis in liver. Inhibits E2F1 transcriptional activity and apoptotic function, possibly by deacetylation. Involved in HES1- and HEY2-mediated transcriptional repression. In cooperation with MYCN seems to be involved in transcriptional repression of DUSP6/MAPK3 leading to MYCN stabilization by phosphorylation at 'Ser-62'. Deacetylates MEF2D. Required for antagonist-mediated transcription suppression of AR-dependent genes which may be linked to local deacetylation of histone H3. Represses HNF1A-mediated transcription. Required for the repression of ESRRG by CREBZF. Deacetylates NR1H3 AND NR1H2 and deacetylation of NR1H3 at 'Lys-434' positively regulates transcription of NR1H3:RXR target genes, promotes NR1H3 proteasomal degradation and results in cholesterol efflux; a promoter clearing mechanism after reach round of transcription is proposed. Involved in lipid metabolism: deacetylates LPIN1, thereby inhibiting diacylglycerol synthesis. Implicated in regulation of adipogenesis and fat mobilization in white adipocytes by repression of PPARG which probably involves association with NCOR1 and SMRT/NCOR2. Deacetylates p300/EP300 and PRMT1. Deacetylates ACSS2 leading to its activation, and HMGCS1 deacetylation. Involved in liver and muscle metabolism. Through deacetylation and activation of PPARGC1A is required to activate fatty acid oxidation in skeletal muscle under low-glucose conditions and is involved in glucose homeostasis. Involved in regulation of PPARA and fatty acid beta-oxidation in liver. Involved in positive regulation of insulin secretion in pancreatic beta cells in response to glucose; the function seems to imply transcriptional repression of UCP2. Proposed to deacetylate IRS2 thereby facilitating its insulin-induced tyrosine phosphorylation. Deacetylates SREBF1 isoform SREBP-1C thereby decreasing its stability and transactivation in lipogenic gene expression. Involved in DNA damage response by repressing genes which are involved in DNA repair, such as XPC and TP73, deacetylating XRCC6/Ku70, and facilitating recruitment of additional factors to sites of damaged DNA, such as SIRT1-deacetylated NBN can recruit ATM to initiate DNA repair and SIRT1-deacetylated XPA interacts with RPA2. Also involved in DNA repair of DNA double-strand breaks by homologous recombination and specifically single-strand annealing independently of XRCC6/Ku70 and NBN. Promotes DNA double-strand breaks by mediating deacetylation of SIRT6. Transcriptional suppression of XPC probably involves an E2F4:RBL2 suppressor complex and protein kinase B (AKT) signaling. Transcriptional suppression of TP73 probably involves E2F4 and PCAF. Deacetylates WRN thereby regulating its helicase and exonuclease activities and regulates WRN nuclear translocation in response to DNA damage. Deacetylates APEX1 at 'Lys-6' and 'Lys-7' and stimulates cellular AP endonuclease activity by promoting the association of APEX1 to XRCC1. Catalyzes deacetylation of ERCC4/XPF, thereby impairing interaction with ERCC1 and nucleotide excision repair (NER). Increases p53/TP53-mediated transcription-independent apoptosis by blocking nuclear translocation of cytoplasmic p53/TP53 and probably redirecting it to mitochondria. Deacetylates XRCC6/Ku70 at 'Lys-539' and 'Lys-542' causing it to sequester BAX away from mitochondria thereby inhibiting stress-induced apoptosis. Is involved in autophagy, presumably by deacetylating ATG5, ATG7 and MAP1LC3B/ATG8. Deacetylates AKT1 which leads to enhanced binding of AKT1 and PDK1 to PIP3 and promotes their activation. Proposed to play role in regulation of STK11/LBK1-dependent AMPK signaling pathways implicated in cellular senescence which seems to involve the regulation of the acetylation status of STK11/LBK1. Can deacetylate STK11/LBK1 and thereby increase its activity, cytoplasmic localization and association with STRAD; however, the relevance of such activity in normal cells is unclear. In endothelial cells is shown to inhibit STK11/LBK1 activity and to promote its degradation. Deacetylates SMAD7 at 'Lys-64' and 'Lys-70' thereby promoting its degradation. Deacetylates CIITA and augments its MHC class II transactivation and contributes to its stability. Deacetylates MECOM/EVI1. Deacetylates PML at 'Lys-487' and this deacetylation promotes PML control of PER2 nuclear localization. During the neurogenic transition, represses selective NOTCH1-target genes through histone deacetylation in a BCL6-dependent manner and leading to neuronal differentiation. Regulates the circadian expression of several core clock genes, including BMAL1, RORC, PER2 and CRY1 and plays a critical role in maintaining a controlled rhythmicity in histone acetylation, thereby contributing to circadian chromatin remodeling. Deacetylates BMAL1 and histones at the circadian gene promoters in order to facilitate repression by inhibitory components of the circadian oscillator. Deacetylates PER2, facilitating its ubiquitination and degradation by the proteasome. Protects cardiomyocytes against palmitate-induced apoptosis. Deacetylates XBP1 isoform 2; deacetylation decreases protein stability of XBP1 isoform 2 and inhibits its transcriptional activity. Deacetylates PCK1 and directs its activity toward phosphoenolpyruvate production promoting gluconeogenesis. Involved in the CCAR2-mediated regulation of PCK1 and NR1D1. Deacetylates CTNB1 at 'Lys-49'. In POMC (pro-opiomelanocortin) neurons, required for leptin-induced activation of PI3K signaling. In addition to protein deacetylase activity, also acts as a protein-lysine deacylase by mediating protein depropionylation and decrotonylation. Mediates depropionylation of Osterix (SP7). Catalyzes decrotonylation of histones; it however does not represent a major histone decrotonylase. Deacetylates SOX9; promoting SOX9 nuclear localization and transactivation activity. Involved in the regulation of centrosome duplication. Deacetylates CENATAC in G1 phase, allowing for SASS6 accumulation on the centrosome and subsequent procentriole assembly. Deacetylates NDC80/HEC1. The chain is NAD-dependent protein deacetylase sirtuin-1 from Rattus norvegicus (Rat).